Consider the following 494-residue polypeptide: MMKSLLFSAHPTSLLLPAPRLRRLLRLRAASSASASAPPRADRRSPGTPSRRPSSSLYARPSLLDMERDRATRRADVDAFLTSLGVDPGELAGLELPVTVDVMRERAEFLGSLGLTQEDLAAYPLALGCSVRKNMVPVLDYLGKLGVRRDALPDLLRRYPQVLHASVVVDLAPVVKYLQGMDVRPTDVPRVLERYPELLGFKLEGTMSTSVAYLVGIGVGRRQVGSVITRFPEVLGMRVGKIIKPFVEHLEGIGLQRLAIARIIEKKPYVLGFGLQEKVKPNIEALVDIGVRKEALASIVMQYPDVLGLELRDKLVAQQSLFESSILVSREDFGRVLERMPQAISLGRAAVLKHVNFLTACGFMLSQVSKMVVACPQLLALNIDIMRMNFEYFKNEMERDLEELVEFPAFFTYGIESTVRPRHEMVSRKGLTCSLAWLLNCSDAKFDERMKYDTIGVEEMEREDSSDMNASVDEVESEEYEDSDYGDSDDEFVR.

Residues 1–54 (MMKSLLFSAHPTSLLLPAPRLRRLLRLRAASSASASAPPRADRRSPGTPSRRPS) constitute a chloroplast transit peptide. Disordered regions lie at residues 32–61 (SASA…YARP) and 457–494 (VEEM…EFVR). A compositionally biased stretch (low complexity) spans 46 to 56 (PGTPSRRPSSS). Composition is skewed to acidic residues over residues 457-466 (VEEMEREDSS) and 473-494 (DEVE…EFVR).

The protein belongs to the mTERF family.

The protein resides in the plastid. The protein localises to the chloroplast stroma. Transcription termination factor required for processing and steady-state levels of plastid transcripts. Required for splicing of the chloroplastic group II intron. Required for the accumulation of 16S and 23S ribosomes. This chain is Transcription termination factor MTERF4, chloroplastic, found in Zea mays (Maize).